Here is a 170-residue protein sequence, read N- to C-terminus: Large ribosomal subunit protein uL11 (170 aa).

This sequence belongs to the universal ribosomal protein uL11 family. In terms of assembly, part of the ribosomal stalk of the 50S ribosomal subunit. Interacts with L10 and the large rRNA to form the base of the stalk. L10 forms an elongated spine to which L12 dimers bind in a sequential fashion forming a multimeric L10(L12)X complex.

In terms of biological role, forms part of the ribosomal stalk which helps the ribosome interact with GTP-bound translation factors. The protein is Large ribosomal subunit protein uL11 of Saccharolobus solfataricus (strain ATCC 35092 / DSM 1617 / JCM 11322 / P2) (Sulfolobus solfataricus).